The primary structure comprises 621 residues: Ubiquitin carboxyl-terminal hydrolase MINDY-2 (621 aa).

Disordered regions lie at residues 1-106 (MESS…RGQY) and 119-179 (VGHE…LESF). A Phosphoserine modification is found at Ser94. Positions 145 to 163 (AAGSEEPSSAGGLSSSCSD) are enriched in low complexity. Residue Cys266 is the Nucleophile of the active site. His448 serves as the catalytic Proton acceptor. The tract at residues 507 to 559 (GQQDQIDQDYLMALSLQQEQQSQEINWEQIPEGISDLELAKKLQEEEDRRASQ) is ubiquitin-binding domain (UBD). The segment at 556–621 (RASQYYQEQE…EKEKNSCVIL (66 aa)) is disordered. The span at 558-591 (SQYYQEQEQAAAAAAAASTQAQQGQPAQASPSSG) shows a compositional bias: low complexity. A compositionally biased stretch (basic and acidic residues) spans 597 to 621 (SERKRKEPREKDKEKEKEKNSCVIL).

It belongs to the MINDY deubiquitinase family. FAM63 subfamily.

The enzyme catalyses Thiol-dependent hydrolysis of ester, thioester, amide, peptide and isopeptide bonds formed by the C-terminal Gly of ubiquitin (a 76-residue protein attached to proteins as an intracellular targeting signal).. In terms of biological role, hydrolase that can remove 'Lys-48'-linked conjugated ubiquitin from proteins. Binds to polyubiquitin chains of different linkage types, including 'Lys-6', 'Lys-11', 'Lys-29', 'Lys-33', 'Lys-48' and 'Lys-63'. May play a regulatory role at the level of protein turnover. This is Ubiquitin carboxyl-terminal hydrolase MINDY-2 from Homo sapiens (Human).